We begin with the raw amino-acid sequence, 90 residues long: Small ribosomal subunit protein uS15c (90 aa).

Belongs to the universal ribosomal protein uS15 family. Part of the 30S ribosomal subunit.

The protein localises to the plastid. It localises to the chloroplast. This Daucus carota (Wild carrot) protein is Small ribosomal subunit protein uS15c (rps15).